The chain runs to 117 residues: Large ribosomal subunit protein eL8 (117 aa).

It belongs to the eukaryotic ribosomal protein eL8 family. As to quaternary structure, part of the 50S ribosomal subunit. Part of the RNase P complex.

Its subcellular location is the cytoplasm. The enzyme catalyses Endonucleolytic cleavage of RNA, removing 5'-extranucleotides from tRNA precursor.. Its function is as follows. Multifunctional RNA-binding protein that recognizes the K-turn motif in ribosomal RNA, the RNA component of RNase P, box H/ACA, box C/D and box C'/D' sRNAs. Part of ribonuclease P, a protein complex that generates mature tRNA molecules by cleaving their 5'-ends, this subunit dramatically stimulates RNase P activity. The chain is Large ribosomal subunit protein eL8 from Methanococcus maripaludis (strain DSM 14266 / JCM 13030 / NBRC 101832 / S2 / LL).